We begin with the raw amino-acid sequence, 833 residues long: Leucine--tRNA ligase (833 aa).

The 'HIGH' region motif lies at 41-52; sequence PYPSGAGLHVGH. Positions 610-614 match the 'KMSKS' region motif; the sequence is KMSKS. Lys613 contributes to the ATP binding site.

It belongs to the class-I aminoacyl-tRNA synthetase family.

The protein resides in the cytoplasm. It catalyses the reaction tRNA(Leu) + L-leucine + ATP = L-leucyl-tRNA(Leu) + AMP + diphosphate. The protein is Leucine--tRNA ligase of Streptococcus pyogenes serotype M18 (strain MGAS8232).